Here is a 1294-residue protein sequence, read N- to C-terminus: von Willebrand factor A domain-containing protein 3B (1294 aa).

The VWFA domain occupies 508 to 684 (CIYILIDTSH…EDLTLLVKEM (177 aa)). Disordered regions lie at residues 732-754 (CAKPQSDVDSTQTSSLNMLKGPW), 778-803 (RSQMSSLRSSACSERKDGLSNASSRR), 1012-1036 (APGEQQKLQGNPTKKTKSKRPDPLK), and 1193-1247 (DTQD…PRTA). The segment covering 738–748 (DVDSTQTSSLN) has biased composition (polar residues). Residues 778-787 (RSQMSSLRSS) are compositionally biased toward low complexity. Residues 1193–1202 (DTQDSREPRR) show a composition bias toward basic and acidic residues. A compositionally biased stretch (basic residues) spans 1203–1212 (EKPRRKKRPA). Low complexity predominate over residues 1213–1236 (KQPLQQAAPSDSDGSSHGISSHGS).

It is found in the cytoplasm. In Homo sapiens (Human), this protein is von Willebrand factor A domain-containing protein 3B (VWA3B).